Reading from the N-terminus, the 89-residue chain is Small ribosomal subunit protein uS15 (89 aa).

The protein belongs to the universal ribosomal protein uS15 family. As to quaternary structure, part of the 30S ribosomal subunit. Forms a bridge to the 50S subunit in the 70S ribosome, contacting the 23S rRNA.

Functionally, one of the primary rRNA binding proteins, it binds directly to 16S rRNA where it helps nucleate assembly of the platform of the 30S subunit by binding and bridging several RNA helices of the 16S rRNA. In terms of biological role, forms an intersubunit bridge (bridge B4) with the 23S rRNA of the 50S subunit in the ribosome. This Prochlorococcus marinus (strain MIT 9312) protein is Small ribosomal subunit protein uS15.